Here is a 336-residue protein sequence, read N- to C-terminus: Probable carboxylesterase 6 (336 aa).

Positions 1 to 20 (MGGTKLTHVTTTNPNNSNIH) are disordered. A compositionally biased stretch (polar residues) spans 7 to 19 (THVTTTNPNNSNI). Positions 96 to 98 (HGG) match the Involved in the stabilization of the negatively charged intermediate by the formation of the oxyanion hole motif. Active-site residues include S176, D276, and H303.

It belongs to the 'GDXG' lipolytic enzyme family. In terms of tissue distribution, expressed in roots, leaves, flowers and siliques.

It carries out the reaction a carboxylic ester + H2O = an alcohol + a carboxylate + H(+). Carboxylesterase acting on esters with varying acyl chain length. This chain is Probable carboxylesterase 6 (CXE6), found in Arabidopsis thaliana (Mouse-ear cress).